Reading from the N-terminus, the 338-residue chain is uncharacterized protein (338 aa).

This is an uncharacterized protein from Bacillus subtilis (strain 168).